Here is a 279-residue protein sequence, read N- to C-terminus: Phosphatidylglycerol--prolipoprotein diacylglyceryl transferase (279 aa).

Transmembrane regions (helical) follow at residues 22 to 42 (SAHWYGLMYLIGFYFIMWSSI), 58 to 78 (ILYFSFLNALIGGRIGYVIFY), 89 to 109 (FIFKVWEGGMSFHGGLLGSII), 128 to 148 (FLVPLIPFGLGFGRIGNFING), 195 to 215 (ISQLYEMFLEGILLFIILNIF), 223 to 243 (GYMSGLFLILYGSFRIIAEFF), and 256 to 276 (YISLGQILSIPMILYGLILII). Arg141 contacts a 1,2-diacyl-sn-glycero-3-phospho-(1'-sn-glycerol).

This sequence belongs to the Lgt family.

Its subcellular location is the cell membrane. The catalysed reaction is L-cysteinyl-[prolipoprotein] + a 1,2-diacyl-sn-glycero-3-phospho-(1'-sn-glycerol) = an S-1,2-diacyl-sn-glyceryl-L-cysteinyl-[prolipoprotein] + sn-glycerol 1-phosphate + H(+). Its pathway is protein modification; lipoprotein biosynthesis (diacylglyceryl transfer). In terms of biological role, catalyzes the transfer of the diacylglyceryl group from phosphatidylglycerol to the sulfhydryl group of the N-terminal cysteine of a prolipoprotein, the first step in the formation of mature lipoproteins. In Wigglesworthia glossinidia brevipalpis, this protein is Phosphatidylglycerol--prolipoprotein diacylglyceryl transferase.